We begin with the raw amino-acid sequence, 194 residues long: Isopentenyl-diphosphate Delta-isomerase (194 aa).

Residues histidine 35 and histidine 42 each contribute to the Mn(2+) site. The 135-residue stretch at 40 to 174 (PLHLAFSSYL…PWALSPWSVD (135 aa)) folds into the Nudix hydrolase domain. The active site involves cysteine 77. Histidine 79 is a Mn(2+) binding site. Position 97 (glutamate 97) interacts with Mg(2+). 2 residues coordinate Mn(2+): glutamate 124 and glutamate 126. Glutamate 126 is a catalytic residue.

Belongs to the IPP isomerase type 1 family. Mg(2+) serves as cofactor. Requires Mn(2+) as cofactor.

It localises to the cytoplasm. The catalysed reaction is isopentenyl diphosphate = dimethylallyl diphosphate. Its pathway is isoprenoid biosynthesis; dimethylallyl diphosphate biosynthesis; dimethylallyl diphosphate from isopentenyl diphosphate: step 1/1. Its function is as follows. Catalyzes the 1,3-allylic rearrangement of the homoallylic substrate isopentenyl (IPP) to its highly electrophilic allylic isomer, dimethylallyl diphosphate (DMAPP). This Frankia alni (strain DSM 45986 / CECT 9034 / ACN14a) protein is Isopentenyl-diphosphate Delta-isomerase.